We begin with the raw amino-acid sequence, 173 residues long: Peptidoglycan-associated lipoprotein (173 aa).

A signal peptide spans 1–21; that stretch reads MKSKKIFKILTLLLPMITTFS. Cysteine 22 is lipidated: N-palmitoyl cysteine. A lipid anchor (S-diacylglycerol cysteine) is attached at cysteine 22. An OmpA-like domain is found at 59–173; it reads ETLEKLKKGN…KNRRSVIIYQ (115 aa).

The protein belongs to the Pal lipoprotein family.

The protein resides in the cell outer membrane. This chain is Peptidoglycan-associated lipoprotein, found in Buchnera aphidicola subsp. Baizongia pistaciae (strain Bp).